Consider the following 625-residue polypeptide: Probable potassium transport system protein Kup (625 aa).

12 consecutive transmembrane segments (helical) span residues 13–33, 53–73, 103–123, 141–161, 172–192, 206–226, 250–270, 282–302, 340–360, 369–389, 400–420, and 422–442; these read TALAALGVVFGDIGTSPLYAL, ILSIIFWCLMLIISIKYVAIV, IYMIAIGFIGASLFFGDGIIT, VFDPFIMPIAIAIIVTLFLVQ, FGPITLVWFLSLGILGIHSVI, AIQFIYHHPIMTFFVMGAVVL, WFFVVLPCLVLNYAGQGALLL, LLVPQWALYPMIIMATMATVI, IYVPFLNWLLLIAIIILILIF, AYGLAVTLTMLCDTILVAVFI, VLLLIIPFFILESVLVGATSL, and ILSGGWVPLLIGAIAVTILMT.

The protein belongs to the HAK/KUP transporter (TC 2.A.72) family.

The protein localises to the cell inner membrane. It catalyses the reaction K(+)(in) + H(+)(in) = K(+)(out) + H(+)(out). Transport of potassium into the cell. Likely operates as a K(+):H(+) symporter. This is Probable potassium transport system protein Kup from Acinetobacter baumannii (strain ACICU).